Consider the following 186-residue polypeptide: PR-toxin biosynthesis cluster protein 7 (186 aa).

Residues 24-43 form a helical membrane-spanning segment; the sequence is LGEVTTGGVTPRGTFIFCPI.

It is found in the membrane. It functions in the pathway sesquiterpene biosynthesis. Part of the gene cluster that mediates the biosynthesis of PR-toxin, a bicyclic sesquiterpene belonging to the eremophilane class and acting as a mycotoxin. The first step of the pathway is catalyzed by the aristolochene synthase which performs the cyclization of trans,trans-farnesyl diphosphate (FPP) to the bicyclic sesquiterpene aristolochene. Following the formation of aristolochene, the non-oxygenated aristolochene is converted to the trioxygenated intermediate eremofortin B, via 7-epi-neopetasone. This conversion appears to involve three enzymes, a hydroxysterol oxidase-like enzyme, the quinone-oxidase prx3 that forms the quinone-type-structure in the bicyclic nucleus of aristolochene with the C8-oxo group and the C-3 hydroxyl group, and the P450 monooxygenase ORF6 that introduces the epoxide at the double bond between carbons 1 and 2. No monoxy or dioxy-intermediates have been reported to be released to the broth, so these three early oxidative reactions may be coupled together. Eremofortin B is further oxidized by another P450 monooxygenase, that introduces a second epoxide between carbons 7 and 11 prior to acetylation to eremofortin A by the acetyltransferase ORF8. The second epoxidation may be performed by a second P450 monooxygenase. After the acetylation step, eremofortin A is converted to eremofortin C and then to PR-toxin. First the conversion of eremofortin A to eremofortin C proceeds by oxidation of the side chain of the molecule at C-12 and is catalyzed by the short-chain oxidoreductase prx1. The cytochrome P450 monooxygenase ORF6 is probably also involved in this step. The primary alcohol formed at C-12 is finally oxidized by the short-chain alcohol dehydrogenase prx4 that forms PR-toxin. The sequence is that of PR-toxin biosynthesis cluster protein 7 from Penicillium roqueforti (strain FM164).